The primary structure comprises 220 residues: Cytidylate kinase (220 aa).

10 to 18 contacts ATP; that stretch reads GPASSGKST.

The protein belongs to the cytidylate kinase family. Type 1 subfamily.

The protein resides in the cytoplasm. It catalyses the reaction CMP + ATP = CDP + ADP. It carries out the reaction dCMP + ATP = dCDP + ADP. This Lactococcus lactis subsp. cremoris (strain MG1363) protein is Cytidylate kinase.